A 931-amino-acid chain; its full sequence is Dymeclin (931 aa).

Disordered regions lie at residues 1–53, 599–618, and 839–931; these read MGVA…SSTT, SPSK…NTNN, and DANN…EKTN. Gly-2 carries N-myristoyl glycine lipidation. 2 stretches are compositionally biased toward low complexity: residues 27-49 and 601-618; these read NNNK…NNNN and SKIN…NTNN. Residues 839–858 show a composition bias toward polar residues; the sequence is DANNFTPKKQLSSDQLHSPP. Composition is skewed to low complexity over residues 859–876 and 889–901; these read TNTT…SSNT and QLQQ…NQEQ. Residues 919–931 are compositionally biased toward polar residues; it reads TTGVELSSTEKTN.

Belongs to the dymeclin family.

This is Dymeclin (dym) from Dictyostelium discoideum (Social amoeba).